Reading from the N-terminus, the 305-residue chain is Carbonic anhydrase 5A, mitochondrial (305 aa).

A mitochondrion-targeting transit peptide spans methionine 1–serine 38. Positions cysteine 39–phenylalanine 296 constitute an Alpha-carbonic anhydrase domain. Zn(2+) contacts are provided by histidine 130, histidine 132, and histidine 155.

It belongs to the alpha-carbonic anhydrase family. Zn(2+) is required as a cofactor.

Its subcellular location is the mitochondrion. The catalysed reaction is hydrogencarbonate + H(+) = CO2 + H2O. With respect to regulation, activated by L- and D-histidine. Activated by L- and D-phenylalanine. Activated by L-adrenaline. Inhibited by coumarins, sulfonamide derivatives such as acetazolamide and Foscarnet (phosphonoformate trisodium salt). Activated by histamine. Functionally, mitochondrial carbonic anhydrase that catalyzes the reversible conversion of carbon dioxide to bicarbonate/HCO3. Mitochondria are impermeable to HCO3, and thus this intramitochondrial carbonic anhydrase is pivotal in providing HCO3 for multiple mitochondrial enzymes that catalyze the formation of essential metabolites of intermediary metabolism in the urea and Krebs cycles. This is Carbonic anhydrase 5A, mitochondrial from Homo sapiens (Human).